The following is a 241-amino-acid chain: Small ribosomal subunit protein uS5 (241 aa).

The tract at residues 1–53 (MSDNEKETQVAEETQNTQAAAESNNEDRKSRRGQRGEGRRGERRNRREESHEN) is disordered. The segment covering 11–22 (AEETQNTQAAAE) has biased composition (low complexity). Residues 25–53 (NEDRKSRRGQRGEGRRGERRNRREESHEN) show a composition bias toward basic and acidic residues. One can recognise an S5 DRBM domain in the interval 55 to 118 (MLDRVVTINR…LDAKKHMFTV (64 aa)).

The protein belongs to the universal ribosomal protein uS5 family. In terms of assembly, part of the 30S ribosomal subunit. Contacts proteins S4 and S8.

In terms of biological role, with S4 and S12 plays an important role in translational accuracy. Located at the back of the 30S subunit body where it stabilizes the conformation of the head with respect to the body. This is Small ribosomal subunit protein uS5 from Bifidobacterium adolescentis (strain ATCC 15703 / DSM 20083 / NCTC 11814 / E194a).